A 34-amino-acid polypeptide reads, in one-letter code: Kappa-theraphotoxin-Scg1a (34 aa).

3 cysteine pairs are disulfide-bonded: cysteine 2–cysteine 16, cysteine 9–cysteine 21, and cysteine 15–cysteine 28. The segment at 4–6 (YLF) is involved in active face.

Belongs to the neurotoxin 10 (Hwtx-1) family. 09 (HaTx) subfamily. Expressed by the venom gland.

Its subcellular location is the secreted. Reversibly inhibits potassium currents in oocytes expressing Kv2.1/KCNB1 channels (Kd=2.7 uM). Acts by shifting activation of the channel to more depolarized voltages. The toxin may bind to the S3b-S4 helices of the voltage sensor paddle. One, two, three or four toxin molecules may bind the Kv2.1/KCNB1 channel. It shows low to moderate affinity for lipid bilayers. It partitions into the bilayer membrane, where it stabilizes at the water/membrane interface. The polypeptide is Kappa-theraphotoxin-Scg1a (Stromatopelma calceatum griseipes (Feather leg baboon tarantula)).